Reading from the N-terminus, the 876-residue chain is Exonuclease mut-7 homolog (876 aa).

Residues 517 to 571 (GLSLLVQQVLGTALDKTQQLSNWDRRPLCEEQVIYAAADAYCLLEVHQALCREPA) enclose the 3'-5' exonuclease domain. Disordered stretches follow at residues 578 to 607 (DLAG…APAA) and 751 to 781 (SHQE…AAPE).

The protein belongs to the mut-7 family. It depends on Mg(2+) as a cofactor.

Functionally, possesses 3'-5' exoribonuclease activity. Required for 3'-end trimming of AGO1-bound miRNAs. This chain is Exonuclease mut-7 homolog (EXD3), found in Homo sapiens (Human).